We begin with the raw amino-acid sequence, 363 residues long: Fructose-bisphosphate aldolase (363 aa).

Positions 56 and 147 each coordinate substrate. The active-site Proton acceptor is E188. The active-site Schiff-base intermediate with dihydroxyacetone-P is K230.

Belongs to the class I fructose-bisphosphate aldolase family.

It catalyses the reaction beta-D-fructose 1,6-bisphosphate = D-glyceraldehyde 3-phosphate + dihydroxyacetone phosphate. It functions in the pathway carbohydrate degradation; glycolysis; D-glyceraldehyde 3-phosphate and glycerone phosphate from D-glucose: step 4/4. This chain is Fructose-bisphosphate aldolase (FBPA), found in Echinococcus multilocularis (Fox tapeworm).